Here is a 96-residue protein sequence, read N- to C-terminus: Large ribosomal subunit protein bL21 (96 aa).

The protein belongs to the bacterial ribosomal protein bL21 family. Part of the 50S ribosomal subunit. Contacts protein L20.

Functionally, this protein binds to 23S rRNA in the presence of protein L20. The polypeptide is Large ribosomal subunit protein bL21 (Prosthecochloris aestuarii (strain DSM 271 / SK 413)).